A 384-amino-acid polypeptide reads, in one-letter code: DNA dC-&gt;dU-editing enzyme APOBEC-3G (384 aa).

The tract at residues 1–60 (MKPHFRNPVERMYQDTFSDNFYNRPILSHRNTVWLCYEVKTKGPSRPPLDAKIFRGQVYS) is essential for cytoplasmic localization. 2 consecutive CMP/dCMP-type deaminase domains span residues 29-138 (HRNT…LRSL) and 214-328 (GRHE…LRTL). Thr32 is subject to Phosphothreonine; by PKA. Zn(2+)-binding residues include His65, Cys97, and Cys100. Residues 209–336 (ELWVRGRHET…TLAKAGAKIS (128 aa)) form a necessary for homooligomerization region. An interaction with DNA region spans residues 213-215 (RGR). Thr218 is subject to Phosphothreonine; by PKA and CAMK2. His257 is a Zn(2+) binding site. Glu259 functions as the Proton donor in the catalytic mechanism. Residues Cys288 and Cys291 each contribute to the Zn(2+) site. The interval 313 to 320 (RIYDDQGR) is interaction with DNA.

The protein belongs to the cytidine and deoxycytidylate deaminase family. Homodimer. Homooligomer. Can bind RNA to form ribonucleoprotein complexes of high-molecular-mass (HMM) or low-molecular-mass (LMM). HMM is inactive and heterogeneous in protein composition because of binding nonselectively to cellular RNAs, which in turn are associated with variety of cellular proteins. The LMM form which is enzymatically active has few or no RNAs associated. Its ability to form homooligomer is distinct from its ability to assemble into HMM. Interacts with APOBEC3B, APOBEC3F, MOV10, AGO2, EIF4E, EIF4ENIF1, DCP2 and DDX6 in an RNA-dependent manner. Interacts with AGO1, AGO3 and PKA/PRKACA. It depends on Zn(2+) as a cofactor.

Its subcellular location is the cytoplasm. The protein resides in the nucleus. It localises to the P-body. It catalyses the reaction a 2'-deoxycytidine in single-stranded DNA + H2O + H(+) = a 2'-deoxyuridine in single-stranded DNA + NH4(+). DNA deaminase (cytidine deaminase) which acts as an inhibitor of retrovirus replication and retrotransposon mobility via deaminase-dependent and -independent mechanisms. Exhibits antiviral activity against vif-deficient: HIV-1 and simian immunodeficiency viruses (SIVs) and also against simian foamy virus (SFV). After the penetration of retroviral nucleocapsids into target cells of infection and the initiation of reverse transcription, it can induce the conversion of cytosine to uracil in the minus-sense single-strand viral DNA, leading to G-to-A hypermutations in the subsequent plus-strand viral DNA. The resultant detrimental levels of mutations in the proviral genome, along with a deamination-independent mechanism that works prior to the proviral integration, together exert efficient antiretroviral effects in infected target cells. Selectively targets single-stranded DNA and does not deaminate double-stranded DNA or single- or double-stranded RNA. May inhibit the mobility of LTR retrotransposons. The sequence is that of DNA dC-&gt;dU-editing enzyme APOBEC-3G (APOBEC3G) from Pan troglodytes (Chimpanzee).